Here is a 156-residue protein sequence, read N- to C-terminus: Transcription antitermination protein NusB (156 aa).

This sequence belongs to the NusB family.

In terms of biological role, involved in transcription antitermination. Required for transcription of ribosomal RNA (rRNA) genes. Binds specifically to the boxA antiterminator sequence of the ribosomal RNA (rrn) operons. The chain is Transcription antitermination protein NusB from Bartonella tribocorum (strain CIP 105476 / IBS 506).